Consider the following 463-residue polypeptide: Protein MRG3-like (463 aa).

A helical transmembrane segment spans residues 54–74; that stretch reads WVLSTGIVSFIAFNIWWVYWP. TPR repeat units lie at residues 84–118, 128–161, 358–389, and 409–442; these read KILRKGLHSEIKKEGANYQKSLEYYLEALEECKAE, TGIEIKIGEMYEKLHMYNDATALYGDMLKKFYNE, ELIRSRLQENQNSCLQYSADCYKSIISFANEN, and SLAHYGIGVINLHKGRLRASKKELKKAIRISEMI.

The protein belongs to the MGR3 family.

The protein resides in the membrane. In Saccharomyces cerevisiae (strain ATCC 204508 / S288c) (Baker's yeast), this protein is Protein MRG3-like.